Here is a 103-residue protein sequence, read N- to C-terminus: Large ribosomal subunit protein bL21 (103 aa).

Belongs to the bacterial ribosomal protein bL21 family. Part of the 50S ribosomal subunit. Contacts protein L20.

Functionally, this protein binds to 23S rRNA in the presence of protein L20. The sequence is that of Large ribosomal subunit protein bL21 from Borreliella afzelii (strain PKo) (Borrelia afzelii).